A 325-amino-acid polypeptide reads, in one-letter code: Tagatose 1,6-diphosphate aldolase 1 (325 aa).

This sequence belongs to the aldolase LacD family.

It carries out the reaction D-tagatofuranose 1,6-bisphosphate = D-glyceraldehyde 3-phosphate + dihydroxyacetone phosphate. It functions in the pathway carbohydrate metabolism; D-tagatose 6-phosphate degradation; D-glyceraldehyde 3-phosphate and glycerone phosphate from D-tagatose 6-phosphate: step 2/2. This chain is Tagatose 1,6-diphosphate aldolase 1 (lacD1), found in Streptococcus pyogenes serotype M1.